The following is a 133-amino-acid chain: Peptide methionine sulfoxide reductase MsrB (133 aa).

Residues 8–130 (LDVWRELLSD…NSASLRLKPR (123 aa)) enclose the MsrB domain. Zn(2+)-binding residues include Cys47, Cys50, Cys96, and Cys99. Cys119 acts as the Nucleophile in catalysis.

Belongs to the MsrB Met sulfoxide reductase family. Requires Zn(2+) as cofactor.

It catalyses the reaction L-methionyl-[protein] + [thioredoxin]-disulfide + H2O = L-methionyl-(R)-S-oxide-[protein] + [thioredoxin]-dithiol. The protein is Peptide methionine sulfoxide reductase MsrB of Azotobacter vinelandii (strain DJ / ATCC BAA-1303).